Here is a 327-residue protein sequence, read N- to C-terminus: Ankyrin repeat domain-containing protein SOWAHD (327 aa).

Residues 1 to 31 (MAQALEDGNPLPKASNRPAESEAPSDPQIKD) form a disordered region. ANK repeat units lie at residues 112–141 (CLEP…AEPS), 147–162 (DPIT…AKHG), and 186–216 (PGSG…LGAD). The segment at 251–311 (ERDRKRENAN…EKKASSTQEG (61 aa)) is disordered. The span at 260-275 (NNNSSRTTTTTTTTSR) shows a compositional bias: low complexity. A compositionally biased stretch (basic and acidic residues) spans 292–305 (HYKEASQPVKEKKA).

Belongs to the SOWAH family.

The polypeptide is Ankyrin repeat domain-containing protein SOWAHD (Sowahd) (Mus musculus (Mouse)).